An 815-amino-acid chain; its full sequence is Subtilisin-like protease SBT2.5 (815 aa).

The N-terminal stretch at 1–19 (MDIGLRIFVVFVLLVAVTA) is a signal peptide. Residues 21-124 (VYIVTMEGDP…RSVDKDWKVR (104 aa)) form the Inhibitor I9 domain. The region spanning 120 to 671 (DWKVRRLTTH…SGHVNPSAAL (552 aa)) is the Peptidase S8 domain. Residues Asp160 and His234 each act as charge relay system in the active site. Positions 397–501 (TLVSANDVLL…VSKSMDLIDY (105 aa)) constitute a PA domain. Residues Asn503 and Asn577 are each glycosylated (N-linked (GlcNAc...) asparagine). The Charge relay system role is filled by Ser596. N-linked (GlcNAc...) asparagine glycosylation is present at Asn701.

It belongs to the peptidase S8 family. As to expression, expressed in roots, leaves and flowers of mature plants.

The sequence is that of Subtilisin-like protease SBT2.5 from Arabidopsis thaliana (Mouse-ear cress).